The primary structure comprises 240 residues: Uridylate kinase (240 aa).

12–15 (KLSG) lines the ATP pocket. The tract at residues 20–25 (GEKGFG) is involved in allosteric activation by GTP. Gly-54 provides a ligand contact to UMP. The ATP site is built by Gly-55 and Arg-59. UMP is bound by residues Asp-74 and 135-142 (TGSPYFST). 3 residues coordinate ATP: Asn-163, Tyr-169, and Asp-172.

It belongs to the UMP kinase family. As to quaternary structure, homohexamer.

The protein localises to the cytoplasm. It catalyses the reaction UMP + ATP = UDP + ADP. It participates in pyrimidine metabolism; CTP biosynthesis via de novo pathway; UDP from UMP (UMPK route): step 1/1. Allosterically activated by GTP. Inhibited by UTP. Functionally, catalyzes the reversible phosphorylation of UMP to UDP. This chain is Uridylate kinase, found in Limosilactobacillus reuteri (Lactobacillus reuteri).